The primary structure comprises 131 residues: RxLR effector protein 62 (131 aa).

The signal sequence occupies residues 1–19; the sequence is MRLDILLFTLSSSTSLALS. The RxLR-dEER signature appears at 49 to 60; it reads RHLREEPANEAR. An N-linked (GlcNAc...) asparagine glycan is attached at Asn-61.

Belongs to the RxLR effector family.

The protein resides in the secreted. It localises to the host cell. Secreted effector that suppresses callose deposition, a hallmark of pathogen-associated molecular pattern (PAMP)-triggered immunity (PTI) and renders host plants more susceptible to bacterial infection. Reduces host plant responsiveness to salicylic acid (SA) in haustoriated cells into which host-translocated effectors are delivered. This is RxLR effector protein 62 from Hyaloperonospora arabidopsidis (strain Emoy2) (Downy mildew agent).